The primary structure comprises 246 residues: 33kDa venom protein (246 aa).

The first 20 residues, 1-20, serve as a signal peptide directing secretion; the sequence is MAGKEVIFIMALFIAVESSP. Repeat copies occupy residues 83-96, 97-110, 111-124, 125-138, 139-152, 153-166, and 167-180. A 12 X approximate tandem repeats of [AV][DE]X[VL]SGSX[DE]QX[KR]X[ST] region spans residues 83–243; it reads GGAVSESVKQ…SGSVGNDDDI (161 aa). The segment at 88-246 is disordered; that stretch reads ESVKQKRETA…VGNDDDISVQ (159 aa). Positions 112 to 123 are enriched in polar residues; sequence ENLSGSFDQQKS. Basic and acidic residues predominate over residues 175–186; it reads DKQKVTVEEKSE. The 8; half-length repeat unit spans residues 181–187; that stretch reads VEEKSEP. Tandem repeats lie at residues 188–201, 202–215, 216–229, and 230–243. A compositionally biased stretch (polar residues) spans 217 to 228; it reads ESLSGSFDQQKS.

As to expression, expressed by the venom gland.

It is found in the secreted. The chain is 33kDa venom protein from Chelonus sp. nr. curvimaculatus (Parasitic wasp).